The chain runs to 97 residues: Late transcription unit B protein (97 aa).

A disordered region spans residues 24-45 (SIEGETKKEHKHHYSTASKEKE).

This is Late transcription unit B protein (ltuB) from Chlamydia trachomatis serovar D (strain ATCC VR-885 / DSM 19411 / UW-3/Cx).